The following is a 93-amino-acid chain: Alpha-defensin 13 (93 aa).

The N-terminal stretch at Met1–Ala19 is a signal peptide. The propeptide occupies Asp20 to Ser58. The interval Ile22 to Leu54 is disordered. 3 cysteine pairs are disulfide-bonded: Cys64-Cys92, Cys66-Cys81, and Cys71-Cys91.

Belongs to the alpha-defensin family. Paneth cells of the small bowel.

It localises to the secreted. In terms of biological role, probably contributes to the antimicrobial barrier function of the small bowel mucosa. This chain is Alpha-defensin 13 (Defa13), found in Mus musculus (Mouse).